Reading from the N-terminus, the 138-residue chain is Protein transport protein got1 homolog (138 aa).

Over 1 to 7 the chain is Cytoplasmic; the sequence is MFTDQQK. Residues 8–28 form a helical membrane-spanning segment; the sequence is IGAMLSAMGLFFGFLGVLLFL. Residues 29-30 are Lumenal-facing; sequence DR. A helical transmembrane segment spans residues 31 to 51; that stretch reads NLLALGNLLLVSGIVLILGLQ. The Cytoplasmic portion of the chain corresponds to 52-62; sequence KTTKFFAQKKK. The helical transmembrane segment at 63–82 threads the bilayer; that stretch reads IKGTILFFFGIVVLLVTRWT. Over 83–87 the chain is Lumenal; it reads FVGMV. A helical transmembrane segment spans residues 88 to 108; that stretch reads IEIFGFVNLFGDAFPIVISIL. Topologically, residues 109 to 138 are cytoplasmic; sequence RKLPIIGNILNHPLVNRLLQKADSGNELPF.

It belongs to the GOT1 family.

The protein localises to the golgi apparatus membrane. Its function is as follows. May be involved in fusion of ER-derived transport vesicles with the Golgi complex. The chain is Protein transport protein got1 homolog (golt1) from Dictyostelium discoideum (Social amoeba).